Consider the following 530-residue polypeptide: Cytochrome P450 2U1 (530 aa).

Helical transmembrane passes span 21 to 41, 99 to 119, 247 to 267, and 328 to 348; these read LQAV…DWVW, VYGN…LSDF, ICLH…YLPF, and LFYI…NSLL. C476 is a heme binding site. The chain crosses the membrane as a helical span at residues 481–501; it reads LAKMELFLMFVSLMQSFTFAL.

Belongs to the cytochrome P450 family. Heme is required as a cofactor. Specifically expressed in thymus and brain. In brain, expressed in cortex, cerebellum, olfactory bulbs, pons and medulla and the limbic structures (at protein level).

The protein localises to the endoplasmic reticulum membrane. The protein resides in the microsome membrane. Its subcellular location is the mitochondrion inner membrane. The catalysed reaction is an omega-methyl-long-chain fatty acid + reduced [NADPH--hemoprotein reductase] + O2 = an omega-hydroxy-long-chain fatty acid + oxidized [NADPH--hemoprotein reductase] + H2O + H(+). It catalyses the reaction (5Z,8Z,11Z,14Z)-eicosatetraenoate + reduced [NADPH--hemoprotein reductase] + O2 = 19-hydroxy-(5Z,8Z,11Z,14Z)-eicosatetraenoate + oxidized [NADPH--hemoprotein reductase] + H2O + H(+). It carries out the reaction (5Z,8Z,11Z,14Z)-eicosatetraenoate + reduced [NADPH--hemoprotein reductase] + O2 = 20-hydroxy-(5Z,8Z,11Z,14Z)-eicosatetraenoate + oxidized [NADPH--hemoprotein reductase] + H2O + H(+). The enzyme catalyses N-[(5Z,8Z,11Z,14Z)-eicosatetraenoyl]-serotonin + reduced [NADPH--hemoprotein reductase] + O2 = 2-oxo-N-[(5Z,8Z,11Z,14Z)-eicosatetraenoyl]-serotonin + oxidized [NADPH--hemoprotein reductase] + H2O + H(+). A cytochrome P450 monooxygenase involved in the metabolism of arachidonic acid and its conjugates. Mechanistically, uses molecular oxygen inserting one oxygen atom into a substrate, and reducing the second into a water molecule, with two electrons provided by NADPH via cytochrome P450 reductase (CPR; NADPH-ferrihemoprotein reductase). Acts as an omega and omega-1 hydroxylase for arachidonic acid and possibly for other long chain fatty acids. May modulate the arachidonic acid signaling pathway and play a role in other fatty acid signaling processes. May down-regulate the biological activities of N-arachidonoyl-serotonin, an endocannabinoid that has anti-nociceptive effects through inhibition of fatty acid amide hydrolase FAAH, TRPV1 receptor and T-type calcium channels. Catalyzes C-2 oxidation of the indole ring of N-arachidonoyl-serotonin forming a less active product 2-oxo-N-arachidonoyl-serotonin. This chain is Cytochrome P450 2U1 (Cyp2u1), found in Rattus norvegicus (Rat).